The primary structure comprises 370 residues: Gibberellin 3-beta-dioxygenase 2-2 (370 aa).

A Fe2OG dioxygenase domain is found at 205-306; that stretch reads MTATMHLNWY…RISLGYFLGP (102 aa). H229, D231, and H287 together coordinate Fe cation. Residue R297 is part of the active site.

This sequence belongs to the iron/ascorbate-dependent oxidoreductase family. GA3OX subfamily. L-ascorbate serves as cofactor. Fe cation is required as a cofactor.

It carries out the reaction gibberellin A20 + 2-oxoglutarate + O2 = gibberellin A1 + succinate + CO2. Its function is as follows. Converts the inactive gibberellin precursors GA9 and GA20 in the bioactives gibberellins GA4 and GA1. The protein is Gibberellin 3-beta-dioxygenase 2-2 (GA3ox2-2) of Triticum aestivum (Wheat).